We begin with the raw amino-acid sequence, 69 residues long: U2-agatoxin-Ao1i (69 aa).

An N-terminal signal peptide occupies residues 1–20 (MKAIISLLLISAMVFSMIEA). Residues 21–34 (VPVXXGLQLFESER) constitute a propeptide that is removed on maturation. 3 disulfide bridges follow: cysteine 36-cysteine 52, cysteine 43-cysteine 57, and cysteine 51-cysteine 67. Leucine 68 is modified (leucine amide).

This sequence belongs to the neurotoxin 01 (U2-agtx) family. In terms of tissue distribution, expressed by the venom gland.

The protein localises to the secreted. Insect active toxin causing rapid but reversible paralysis in crickets. No activity shown in mammals. Does not show effect on mammalian voltage-gated calcium channels. This is U2-agatoxin-Ao1i from Agelena orientalis (Funnel-web spider).